Here is a 486-residue protein sequence, read N- to C-terminus: Cardiolipin synthase A (486 aa).

2 helical membrane passes run 3-23 (TFYT…IAGV) and 38-58 (MAWL…YLSV). PLD phosphodiesterase domains lie at 219–246 (MDLR…VDPR) and 399–426 (EGGL…DMRS). Catalysis depends on residues His224, Lys226, Asp231, His404, Lys406, and Asp411.

The protein belongs to the phospholipase D family. Cardiolipin synthase subfamily. ClsA sub-subfamily.

The protein resides in the cell inner membrane. It carries out the reaction 2 a 1,2-diacyl-sn-glycero-3-phospho-(1'-sn-glycerol) = a cardiolipin + glycerol. In terms of biological role, catalyzes the reversible phosphatidyl group transfer from one phosphatidylglycerol molecule to another to form cardiolipin (CL) (diphosphatidylglycerol) and glycerol. The sequence is that of Cardiolipin synthase A from Salmonella gallinarum (strain 287/91 / NCTC 13346).